The sequence spans 104 residues: Phosphoribosyl-ATP pyrophosphatase (104 aa).

The protein belongs to the PRA-PH family.

The protein resides in the cytoplasm. The enzyme catalyses 1-(5-phospho-beta-D-ribosyl)-ATP + H2O = 1-(5-phospho-beta-D-ribosyl)-5'-AMP + diphosphate + H(+). The protein operates within amino-acid biosynthesis; L-histidine biosynthesis; L-histidine from 5-phospho-alpha-D-ribose 1-diphosphate: step 2/9. The protein is Phosphoribosyl-ATP pyrophosphatase of Methanoregula boonei (strain DSM 21154 / JCM 14090 / 6A8).